Consider the following 366-residue polypeptide: Ribosomal RNA large subunit methyltransferase M (366 aa).

S-adenosyl-L-methionine is bound by residues Ser-188, 221-224, Asp-240, Asp-260, and Asp-277; that span reads CPGG. The active-site Proton acceptor is the Lys-306.

The protein belongs to the class I-like SAM-binding methyltransferase superfamily. RNA methyltransferase RlmE family. RlmM subfamily. As to quaternary structure, monomer.

Its subcellular location is the cytoplasm. The enzyme catalyses cytidine(2498) in 23S rRNA + S-adenosyl-L-methionine = 2'-O-methylcytidine(2498) in 23S rRNA + S-adenosyl-L-homocysteine + H(+). In terms of biological role, catalyzes the 2'-O-methylation at nucleotide C2498 in 23S rRNA. This Photorhabdus asymbiotica subsp. asymbiotica (strain ATCC 43949 / 3105-77) (Xenorhabdus luminescens (strain 2)) protein is Ribosomal RNA large subunit methyltransferase M.